The primary structure comprises 59 residues: Large ribosomal subunit protein bL33 (59 aa).

It belongs to the bacterial ribosomal protein bL33 family.

The polypeptide is Large ribosomal subunit protein bL33 (Borrelia turicatae (strain 91E135)).